An 804-amino-acid chain; its full sequence is Serine/threonine-protein kinase ATG1 (804 aa).

The Protein kinase domain maps to 12 to 308 (FTIGPEIGRG…FQEFFNDPLI (297 aa)). Residues 18–26 (IGRGSFANV) and Lys41 contribute to the ATP site. Residue Asp158 is the Proton acceptor of the active site. Disordered regions lie at residues 339–364 (TSPP…ERAP), 395–415 (INKS…KGAR), and 455–506 (PSPH…MPIS). The span at 404 to 415 (TVKDGQIKKGAR) shows a compositional bias: basic and acidic residues. A compositionally biased stretch (polar residues) spans 462 to 495 (NEHSAANPSGPTETQTQRRFSPSSRTSSIGSNRR).

It belongs to the protein kinase superfamily. Ser/Thr protein kinase family. APG1/unc-51/ULK1 subfamily. Homodimer. Forms a ternary complex with ATG13 and ATG17.

The protein localises to the cytoplasm. It localises to the preautophagosomal structure membrane. It catalyses the reaction L-seryl-[protein] + ATP = O-phospho-L-seryl-[protein] + ADP + H(+). The enzyme catalyses L-threonyl-[protein] + ATP = O-phospho-L-threonyl-[protein] + ADP + H(+). Serine/threonine protein kinase involved in the cytoplasm to vacuole transport (Cvt) and found to be essential in autophagy, where it is required for the formation of autophagosomes. Involved in the clearance of protein aggregates which cannot be efficiently cleared by the proteasome. Required for selective autophagic degradation of the nucleus (nucleophagy) as well as for mitophagy which contributes to regulate mitochondrial quantity and quality by eliminating the mitochondria to a basal level to fulfill cellular energy requirements and preventing excess ROS production. Also involved in endoplasmic reticulum-specific autophagic process, in selective removal of ER-associated degradation (ERAD) substrates. Plays a key role in ATG9 and ATG23 cycling through the pre-autophagosomal structure and is necessary to promote ATG18 binding to ATG9 through phosphorylation of ATG9. Catalyzes phosphorylation of ATG4, decreasing the interaction between ATG4 and ATG8 and impairing deconjugation of PE-conjugated forms of ATG8. The polypeptide is Serine/threonine-protein kinase ATG1 (Pichia angusta (Yeast)).